Reading from the N-terminus, the 114-residue chain is Ribonuclease P protein component (114 aa).

Belongs to the RnpA family. As to quaternary structure, consists of a catalytic RNA component (M1 or rnpB) and a protein subunit.

It carries out the reaction Endonucleolytic cleavage of RNA, removing 5'-extranucleotides from tRNA precursor.. In terms of biological role, RNaseP catalyzes the removal of the 5'-leader sequence from pre-tRNA to produce the mature 5'-terminus. It can also cleave other RNA substrates such as 4.5S RNA. The protein component plays an auxiliary but essential role in vivo by binding to the 5'-leader sequence and broadening the substrate specificity of the ribozyme. This chain is Ribonuclease P protein component, found in Buchnera aphidicola subsp. Schizaphis graminum (strain Sg).